Reading from the N-terminus, the 489-residue chain is MASAPSVTSLADEVNCPICQGTLREPVTIDCGHNFCRGCLTRYCEIPGPESEESLSCPLCKEPFRPGSFRPNWQLANVVENIERLQLASTRGLEVEDACPEHGEKIYFFCEEDEAQLCVVCRETGQHGAHTVRFLEDAAGPYREQIQKCLVCLRKEREEIQETQSRENKRIQVLLTQVATKRQQVISQFAHLSQFLQQQQTALLAQLEGLDGDILKQQEEFDSLATGEICRFSTLIEELEEKNKRTARGLLTDIRSTLIRCETRKCRKPEAISPELGQRIRDFPQQAIPLRQEMKTFLEKLCFELDYEPAHISLDPQTSHPKLLLSEDHRRARFSYKWQNSPDTPQRFDRVTCVLAQCGFTGGRHTWMVNVDLAHGGSCTVGVVREDVRRKGELRLRPEEGIWAVRLAWGFVSALGSFPTRLALEEQPRKVQVSLDYEVGWITFVNAVTQEHIYTFTASFTQKIFPLFGLWGRGSSFSLSCQEGAVSLL.

Residues 16–61 (CPICQGTLREPVTIDCGHNFCRGCLTRYCEIPGPESEESLSCPLCK) form an RING-type zinc finger. The B box-type zinc-finger motif lies at 94 to 135 (EVEDACPEHGEKIYFFCEEDEAQLCVVCRETGQHGAHTVRFL). Zn(2+)-binding residues include C99, H102, C121, and H127. Positions 144–180 (EQIQKCLVCLRKEREEIQETQSRENKRIQVLLTQVAT) form a coiled coil. One can recognise a B30.2/SPRY domain in the interval 292 to 486 (QEMKTFLEKL…FSLSCQEGAV (195 aa)).

This sequence belongs to the TRIM/RBCC family. Interacts with IFNAR1; this interaction prevents association of IFNAR1 with TYK2. Expressed in embryonic liver.

It is found in the cytoplasm. E3 ligase that plays an essential role in the differentiation and survival of terminal erythroid cells. May directly bind to PTEN and promote its ubiquitination, resulting in its proteasomal degradation and activation of hypertrophic signaling. In addition, plays a role in immune response regulation by repressing the phosphorylation of STAT1 and STAT2 in the interferon/JAK/STAT signaling pathway independent of its E3 ligase activity. Mechanistically, interacts with the intracellular domain of IFNAR1 and thereby inhibits the association between TYK2 and IFNAR1. This chain is Tripartite motif-containing protein 10 (Trim10), found in Mus musculus (Mouse).